Reading from the N-terminus, the 397-residue chain is LL-diaminopimelate aminotransferase (397 aa).

Residues Y14 and G41 each coordinate substrate. Pyridoxal 5'-phosphate contacts are provided by residues Y71, 104–105 (AK), Y128, N174, Y205, and 233–235 (SFS). Substrate-binding residues include K105, Y128, and N174. An N6-(pyridoxal phosphate)lysine modification is found at K236. 2 residues coordinate pyridoxal 5'-phosphate: R244 and N275. Substrate contacts are provided by N275 and R368.

This sequence belongs to the class-I pyridoxal-phosphate-dependent aminotransferase family. LL-diaminopimelate aminotransferase subfamily. As to quaternary structure, homodimer. It depends on pyridoxal 5'-phosphate as a cofactor.

The catalysed reaction is (2S,6S)-2,6-diaminopimelate + 2-oxoglutarate = (S)-2,3,4,5-tetrahydrodipicolinate + L-glutamate + H2O + H(+). The protein operates within amino-acid biosynthesis; L-lysine biosynthesis via DAP pathway; LL-2,6-diaminopimelate from (S)-tetrahydrodipicolinate (aminotransferase route): step 1/1. Functionally, involved in the synthesis of meso-diaminopimelate (m-DAP or DL-DAP), required for both lysine and peptidoglycan biosynthesis. Catalyzes the direct conversion of tetrahydrodipicolinate to LL-diaminopimelate. The polypeptide is LL-diaminopimelate aminotransferase (Chlamydia pneumoniae (Chlamydophila pneumoniae)).